We begin with the raw amino-acid sequence, 59 residues long: Large ribosomal subunit protein uL30 (59 aa).

It belongs to the universal ribosomal protein uL30 family. In terms of assembly, part of the 50S ribosomal subunit.

This Geobacter sulfurreducens (strain ATCC 51573 / DSM 12127 / PCA) protein is Large ribosomal subunit protein uL30.